A 227-amino-acid chain; its full sequence is Cytidylate kinase (227 aa).

12 to 20 (GPSGAGKGT) is a binding site for ATP.

Belongs to the cytidylate kinase family. Type 1 subfamily.

Its subcellular location is the cytoplasm. The catalysed reaction is CMP + ATP = CDP + ADP. It carries out the reaction dCMP + ATP = dCDP + ADP. This Salmonella arizonae (strain ATCC BAA-731 / CDC346-86 / RSK2980) protein is Cytidylate kinase.